A 280-amino-acid chain; its full sequence is 2,3,4,5-tetrahydropyridine-2,6-dicarboxylate N-succinyltransferase (280 aa).

Substrate-binding residues include Arg-107 and Asp-144.

The protein belongs to the transferase hexapeptide repeat family. In terms of assembly, homotrimer.

The protein resides in the cytoplasm. It carries out the reaction (S)-2,3,4,5-tetrahydrodipicolinate + succinyl-CoA + H2O = (S)-2-succinylamino-6-oxoheptanedioate + CoA. The protein operates within amino-acid biosynthesis; L-lysine biosynthesis via DAP pathway; LL-2,6-diaminopimelate from (S)-tetrahydrodipicolinate (succinylase route): step 1/3. This chain is 2,3,4,5-tetrahydropyridine-2,6-dicarboxylate N-succinyltransferase, found in Granulibacter bethesdensis (strain ATCC BAA-1260 / CGDNIH1).